The chain runs to 560 residues: 2-succinylbenzoate--CoA ligase, chloroplastic/peroxisomal (560 aa).

The transit peptide at 1 to 15 (MANHSRPHICQCLTR) directs the protein to the chloroplast. Helical transmembrane passes span 69–89 (LFLE…PLNY), 189–209 (GVTI…AIAG), and 225–245 (IGGL…VLLP). The Microbody targeting signal signature appears at 558 to 560 (SSL).

It belongs to the ATP-dependent AMP-binding enzyme family. MenE subfamily. In terms of tissue distribution, high expression in young leaves and flowers. Not expressed in roots.

The protein localises to the plastid. It is found in the chloroplast membrane. Its subcellular location is the peroxisome membrane. The enzyme catalyses 2-succinylbenzoate + ATP + CoA = 2-succinylbenzoyl-CoA + AMP + diphosphate. Functionally, involved in the biosynthesis of phylloquinone (vitamin K1). Converts 2-succinylbenzoate (OSB) to 2-succinylbenzoyl-CoA (OSB-CoA). This Arabidopsis thaliana (Mouse-ear cress) protein is 2-succinylbenzoate--CoA ligase, chloroplastic/peroxisomal (AAE14).